The chain runs to 210 residues: Pyrrolidone-carboxylate peptidase (210 aa).

Active-site residues include Glu80, Cys143, and His162.

The protein belongs to the peptidase C15 family. In terms of assembly, homotetramer.

The protein localises to the cytoplasm. It carries out the reaction Release of an N-terminal pyroglutamyl group from a polypeptide, the second amino acid generally not being Pro.. Its function is as follows. Removes 5-oxoproline from various penultimate amino acid residues except L-proline. This Chromobacterium violaceum (strain ATCC 12472 / DSM 30191 / JCM 1249 / CCUG 213 / NBRC 12614 / NCIMB 9131 / NCTC 9757 / MK) protein is Pyrrolidone-carboxylate peptidase.